The following is a 102-amino-acid chain: NADH-quinone oxidoreductase subunit K (102 aa).

3 helical membrane-spanning segments follow: residues 6–26 (MEHG…GLLI), 30–50 (LLYI…AFVV), and 65–85 (ILVI…LLLL).

Belongs to the complex I subunit 4L family. In terms of assembly, NDH-1 is composed of 13 different subunits. Subunits NuoA, H, J, K, L, M, N constitute the membrane sector of the complex.

The protein resides in the cell inner membrane. It catalyses the reaction a quinone + NADH + 5 H(+)(in) = a quinol + NAD(+) + 4 H(+)(out). Functionally, NDH-1 shuttles electrons from NADH, via FMN and iron-sulfur (Fe-S) centers, to quinones in the respiratory chain. The immediate electron acceptor for the enzyme in this species is believed to be ubiquinone. Couples the redox reaction to proton translocation (for every two electrons transferred, four hydrogen ions are translocated across the cytoplasmic membrane), and thus conserves the redox energy in a proton gradient. This Shewanella oneidensis (strain ATCC 700550 / JCM 31522 / CIP 106686 / LMG 19005 / NCIMB 14063 / MR-1) protein is NADH-quinone oxidoreductase subunit K.